Reading from the N-terminus, the 278-residue chain is MEFTKMHGLGNDFVIVNGFGQSLPDDPGALARRVCDRRLGVGADGLVLLLPSAAADLRMRVFNPDGSEPEMCGNAIRCVALYARRRGLVAKTQLEVETLAGLIRPEILLDGDRETVRVDMGRPRLERAEIPMRGPAGPVVGEVLDAGERSFMVTAVSMGNPHCVVFGADLDDAGFRKYGPLLEVHPAFPARTNVEFVEVLSPGEVAVRVWERGVGPTPACGTGACAVAVAGVLTGRTARRVHVRLPGGVLLIEWPDDAGPVYMSGPAEEVFDGKWVRA.

2 residues coordinate substrate: asparagine 11 and asparagine 63. Cysteine 72 (proton donor) is an active-site residue. Substrate is bound by residues 73-74 (GN), asparagine 160, asparagine 193, and 211-212 (ER). Cysteine 220 serves as the catalytic Proton acceptor. 221 to 222 (GT) serves as a coordination point for substrate.

It belongs to the diaminopimelate epimerase family. As to quaternary structure, homodimer.

The protein localises to the cytoplasm. The enzyme catalyses (2S,6S)-2,6-diaminopimelate = meso-2,6-diaminopimelate. The protein operates within amino-acid biosynthesis; L-lysine biosynthesis via DAP pathway; DL-2,6-diaminopimelate from LL-2,6-diaminopimelate: step 1/1. Catalyzes the stereoinversion of LL-2,6-diaminopimelate (L,L-DAP) to meso-diaminopimelate (meso-DAP), a precursor of L-lysine and an essential component of the bacterial peptidoglycan. In Desulforudis audaxviator (strain MP104C), this protein is Diaminopimelate epimerase.